A 587-amino-acid polypeptide reads, in one-letter code: Hatching enzyme (587 aa).

A signal peptide spans Met1 to Thr18. A propeptide spans Val19–Pro166 (activation peptide). 3 N-linked (GlcNAc...) asparagine glycosylation sites follow: Asn64, Asn126, and Asn141. The short motif at Pro157 to Val164 is the Cysteine switch element. Zn(2+)-binding residues include Cys159 and His283. The active site involves Glu284. The Zn(2+) site is built by His287 and His293. The disordered stretch occupies residues Leu325 to Gly382. Residues Thr334 to Ser371 show a composition bias toward low complexity. Cys380 and Cys582 are joined by a disulfide. Hemopexin repeat units follow at residues Ser381–Phe422, Pro425–Leu468, Pro469–Val513, and His518–Cys570. Residue Asn584 is glycosylated (N-linked (GlcNAc...) asparagine).

It belongs to the peptidase M10A family. Requires Zn(2+) as cofactor.

The catalysed reaction is Hydrolysis of proteins of the fertilization envelope and dimethylcasein.. Allows the sea urchin to digest the protective envelope derived from the egg extracellular matrix; thus allowing the sea urchin to swim freely. The chain is Hatching enzyme from Paracentrotus lividus (Common sea urchin).